The primary structure comprises 66 residues: Ocellatin-PT2 (66 aa).

The first 22 residues, 1 to 22, serve as a signal peptide directing secretion; sequence MAFLKKSLFLVLFLGLVSLSIC. The propeptide occupies 23-39; sequence DEEKRQDEDDDDDDDEE. V66 is modified (valine amide).

In terms of tissue distribution, expressed by the skin glands.

Its subcellular location is the secreted. Its function is as follows. Has no antibacterial activity against Gram-negative bacteria E.coli ATCC 25922, S.pneumoniae ATCC 700603 and S.choleraesuis ATCC 14028 or against Gram-positive bacterium S.aureus ATCC 29313. Shows no hemolytic activity and no cytotoxicity. The protein is Ocellatin-PT2 of Leptodactylus pustulatus (Ceara white-lipped frog).